The sequence spans 413 residues: Exodeoxyribonuclease I (413 aa).

The Exonuclease domain maps to 12-193 (LFYDYETFGI…VSDVYATIEI (182 aa)). Mg(2+)-binding residues include D15, E17, and D186. Position 17 (E17) interacts with substrate. The region spanning 202-349 (PRLFDFFFKI…QNIKIIFSKN (148 aa)) is the ExoI SH3-like domain. The region spanning 350 to 413 (NNTNQFFNVD…RYRARNFFIH (64 aa)) is the ExoI C-terminal domain.

In terms of assembly, monomer. Interacts with ssb (via C-terminus); this interaction stimulates the exonuclease activity by recruiting the enzyme to its substrate. Requires Mg(2+) as cofactor.

It catalyses the reaction Exonucleolytic cleavage in the 3'- to 5'-direction to yield nucleoside 5'-phosphates.. Degrades single-stranded DNA (ssDNA) in a highly processive manner. Also functions as a DNA deoxyribophosphodiesterase that releases deoxyribose-phosphate moieties following the cleavage of DNA at an apurinic/apyrimidinic (AP) site by either an AP endonuclease or AP lyase. The polypeptide is Exodeoxyribonuclease I (sbcB) (Buchnera aphidicola subsp. Acyrthosiphon pisum (strain APS) (Acyrthosiphon pisum symbiotic bacterium)).